The following is a 55-amino-acid chain: Rubredoxin-1 (55 aa).

The region spanning 1–54 (MKKWQCVVCGLIYDEAKGWPEEGIEAGTRWEDVPEDWLCPDCGVGKLDFEMIEI) is the Rubredoxin-like domain. Fe cation-binding residues include Cys6, Cys9, Cys39, and Cys42.

This sequence belongs to the rubredoxin family. It depends on Fe(3+) as a cofactor.

The protein resides in the cytoplasm. Its pathway is hydrocarbon metabolism; alkane degradation. Functionally, involved in the hydrocarbon hydroxylating system, which transfers electrons from NADH to rubredoxin reductase and then through rubredoxin to alkane 1 monooxygenase. This Pseudomonas aeruginosa (strain ATCC 15692 / DSM 22644 / CIP 104116 / JCM 14847 / LMG 12228 / 1C / PRS 101 / PAO1) protein is Rubredoxin-1 (rubA1).